A 459-amino-acid chain; its full sequence is MIIYNTLTGIKEPFIPLNVDNIKVYVCGPTVYNFVHIGNARSIVIYDVLFRLLKLLYPSVTYVRNITDIDDKIINVAQSNGQNICEVTSVYIKAFHEDMKMLNCLEPTYEPKATDNINVMINLIQKLIDHGHAYVDNATVFFNVESYPSYGQLSKRNIKELIYGSRVDIELGKKHPGDFVLWKPATEVDNKLMSCWPSPWGLGRPGWHIECSAMSYCYLSENFDIHGGGADLQFPHHENEIAQSCCAFPGSYYAKYWIHNGFLTVNGEKMSKSLGNVLTVRQLLESGVKGELIRYVLLNTHYRKPLDWFNMTLVSAQESLNRMYTALSSVNVDLSLDDDVELSSDVVDCLKDDINTPKAISVLHEMVTEINKTSDVMKKTSLAKTLIKTANFLGILQHSWQDWFRVNENDQEIDKLIDERRIARANNDFKKADDIRQLLLSKGIVLSDNKDGTTHWYKK.

Cys27 lines the Zn(2+) pocket. Residues Pro29–Asn39 carry the 'HIGH' region motif. Zn(2+) contacts are provided by Cys211, His236, and Glu240. Positions Lys269–Ser273 match the 'KMSKS' region motif. Position 272 (Lys272) interacts with ATP.

Belongs to the class-I aminoacyl-tRNA synthetase family. In terms of assembly, monomer. Requires Zn(2+) as cofactor.

Its subcellular location is the cytoplasm. It catalyses the reaction tRNA(Cys) + L-cysteine + ATP = L-cysteinyl-tRNA(Cys) + AMP + diphosphate. The sequence is that of Cysteine--tRNA ligase from Ehrlichia canis (strain Jake).